An 862-amino-acid chain; its full sequence is MELPATSGLNAQPGNAEGTTASTRPATALSVAERYLEALPLPAEARAALRREAGIEPADKDAVALAKLHRALARLDAAQTASIEGSVPAYASIGSRLDAAYGTPHAGTATPEPAPPLEHDTAGRIHLDTGPEPARRSMVPWPWVLGPIWRARRAIGRLFSGGTAPVPYEQPDSPDPKGIWRFVGARRRLTLLALMIAQTVAATWAMSSVLPYHGHDWLEAIIIALFALLFCWVSAGFWTAITGFLLLAFHGDRFVISRRAAPNAPIPDDARTAIVMPICNEDVQRVFAGLRATYESLQRTGHLEHFDFFVLSDSGDPDIRTAEADAWLHVCRALDGFGRVFYRWRRHRVKRKSGNIDDFCRRWGGRYRYMIVLDADSVMSGDCLTRLVQLMEGAPSAGIIQTAPLAAGRDTLYARIQQFATRVYGPLFTAGLHYWQLGESHYWGHNAIIRLEPFIKHCALAPIPGKGSLSGEIMSHDFVEAALMRRAGWAVWIAYDLDGSYEEMPPNLLDELGRDRRWCHGNLMNFRLFGSPGFHPVHRAVFVTGVMAYLSAPLWFLFLLLSTALLAKHTLIAPEYFTQPRQLFPIWPEWHPEKAAALFSATATVLFLPKILSVLVLWAKGPRRFGGAVHLALSMVIEAVFSVLAAPVRMLFHTRFVTAAFLGWKVHWKSPPRDDAQTHWGDAVRRHGLHTLLGLGWAALVYWLNPSFLWWLSPVVGALIVSILLSVFSSRVTLGRGMRRWRLFMIPEEVRPPRELRAMRKHLRQAPPTPDFRLAVVDPVTNALMCAIGTARFPHDPKLLEVRDATVLQALAAGPDKLTSKQKLVLLSDPLALSALHLAVWSSDVHRAAWLPANALASKAAA.

Positions 1-25 (MELPATSGLNAQPGNAEGTTASTRP) are disordered. Residues 7–25 (SGLNAQPGNAEGTTASTRP) show a composition bias toward polar residues. A run of 5 helical transmembrane segments spans residues 188-210 (RLTL…SSVL), 545-567 (GVMA…ALLA), 597-619 (ALFS…VLWA), 626-648 (GGAV…AAPV), and 708-730 (FLWW…VFSS).

It belongs to the glycosyltransferase 2 family. OpgH subfamily.

It is found in the cell inner membrane. It participates in glycan metabolism; osmoregulated periplasmic glucan (OPG) biosynthesis. Functionally, involved in the biosynthesis of osmoregulated periplasmic glucans (OPGs). The polypeptide is Glucans biosynthesis glucosyltransferase H (Ralstonia nicotianae (strain ATCC BAA-1114 / GMI1000) (Ralstonia solanacearum)).